Here is an 89-residue protein sequence, read N- to C-terminus: Small ribosomal subunit protein uS14 (89 aa).

It belongs to the universal ribosomal protein uS14 family. In terms of assembly, part of the 30S ribosomal subunit. Contacts proteins S3 and S10.

Binds 16S rRNA, required for the assembly of 30S particles and may also be responsible for determining the conformation of the 16S rRNA at the A site. In Oenococcus oeni (strain ATCC BAA-331 / PSU-1), this protein is Small ribosomal subunit protein uS14.